The sequence spans 724 residues: WD repeat-containing protein 91 (724 aa).

The stretch at 178 to 207 (FDSEVQRITSLQEDNEQLRQTVFALQGESR) forms a coiled coil. The disordered stretch occupies residues 249 to 365 (SRNFFSTFLP…PDQTDSANQT (117 aa)). 2 stretches are compositionally biased toward polar residues: residues 270-279 (GPQSSPTQSA) and 303-315 (SVSS…STSH). Ser-274 carries the post-translational modification Phosphoserine. Positions 322 to 333 (QDHEKERKELFS) are enriched in basic and acidic residues. The span at 349-365 (DTQTEAPPDQTDSANQT) shows a compositional bias: polar residues. WD repeat units follow at residues 389-428 (EHHS…QTKA), 431-471 (MSKS…CLYE), 499-532 (AHSG…QQLQ), 537-576 (PGPV…SALS), 579-618 (AHDG…VKQS), 641-679 (VQVP…AGLE), and 686-724 (GHKA…AQKP).

The protein belongs to the WD repeat WDR91 family.

The protein localises to the early endosome membrane. It is found in the late endosome membrane. In terms of biological role, functions as a negative regulator of the PI3 kinase/PI3K activity associated with endosomal membranes. By modifying the phosphatidylinositol 3-phosphate/PtdInsP3 content of endosomal membranes may regulate endosome fusion, recycling, sorting and early to late endosome transport. In Danio rerio (Zebrafish), this protein is WD repeat-containing protein 91 (wdr91).